Here is a 500-residue protein sequence, read N- to C-terminus: Cysteine--tRNA ligase (500 aa).

Cys30 is a Zn(2+) binding site. The 'HIGH' region motif lies at 32–42 (PTVYDYAHIGN). Residues Cys224, His263, and Glu267 each contribute to the Zn(2+) site. Positions 296-300 (KMSKS) match the 'KMSKS' region motif. Residue Lys299 participates in ATP binding.

The protein belongs to the class-I aminoacyl-tRNA synthetase family. In terms of assembly, monomer. Zn(2+) is required as a cofactor.

The protein resides in the cytoplasm. It carries out the reaction tRNA(Cys) + L-cysteine + ATP = L-cysteinyl-tRNA(Cys) + AMP + diphosphate. The chain is Cysteine--tRNA ligase from Bartonella bacilliformis (strain ATCC 35685 / KC583 / Herrer 020/F12,63).